The following is a 231-amino-acid chain: 7-cyano-7-deazaguanine synthase (231 aa).

Position 8–18 (8–18 (FSGGQDSTTCL)) interacts with ATP. Zn(2+) is bound by residues Cys-188, Cys-197, Cys-200, and Cys-203.

It belongs to the QueC family. The cofactor is Zn(2+).

The enzyme catalyses 7-carboxy-7-deazaguanine + NH4(+) + ATP = 7-cyano-7-deazaguanine + ADP + phosphate + H2O + H(+). It participates in purine metabolism; 7-cyano-7-deazaguanine biosynthesis. Functionally, catalyzes the ATP-dependent conversion of 7-carboxy-7-deazaguanine (CDG) to 7-cyano-7-deazaguanine (preQ(0)). The sequence is that of 7-cyano-7-deazaguanine synthase from Salmonella gallinarum (strain 287/91 / NCTC 13346).